The following is a 382-amino-acid chain: Cytochrome b (382 aa).

Transmembrane regions (helical) follow at residues 36–56 (FGSL…FLTM), 80–101 (WLIR…YLHI), 116–136 (WFIG…GYVL), and 181–201 (FYTF…IHLL). Residues His-86 and His-100 each contribute to the heme b site. Heme b is bound by residues His-185 and His-199. Residue His-204 coordinates a ubiquinone. 4 helical membrane passes run 229–249 (YKDL…TLSN), 291–311 (LGGV…PLTF), 323–343 (INQF…WIGA), and 350–370 (YIIT…LNPL).

This sequence belongs to the cytochrome b family. The main subunits of complex b-c1 are: cytochrome b, cytochrome c1 and the Rieske protein. The cofactor is heme b.

Its subcellular location is the mitochondrion inner membrane. In terms of biological role, component of the ubiquinol-cytochrome c reductase complex (complex III or cytochrome b-c1 complex) that is part of the mitochondrial respiratory chain. The b-c1 complex mediates electron transfer from ubiquinol to cytochrome c. Contributes to the generation of a proton gradient across the mitochondrial membrane that is then used for ATP synthesis. This is Cytochrome b (MT-CYB) from Samia ricini (Indian eri silkmoth).